The chain runs to 273 residues: Hemin import ATP-binding protein HmuV (273 aa).

Residues 2-256 (LTAHHLDVAR…AHIAQCYGFA (255 aa)) enclose the ABC transporter domain. 34–41 (GRNGAGKS) is an ATP binding site.

This sequence belongs to the ABC transporter superfamily. Heme (hemin) importer (TC 3.A.1.14.5) family. As to quaternary structure, the complex is composed of two ATP-binding proteins (HmuV), two transmembrane proteins (HmuU) and a solute-binding protein (HmuT).

It is found in the cell inner membrane. Functionally, part of the ABC transporter complex HmuTUV involved in hemin import. Responsible for energy coupling to the transport system. The chain is Hemin import ATP-binding protein HmuV from Burkholderia lata (strain ATCC 17760 / DSM 23089 / LMG 22485 / NCIMB 9086 / R18194 / 383).